The following is a 177-amino-acid chain: Pyruvate synthase subunit PorC (177 aa).

As to quaternary structure, heterotetramer of one alpha, one beta, one delta and one gamma chain.

It carries out the reaction 2 oxidized [2Fe-2S]-[ferredoxin] + pyruvate + CoA = 2 reduced [2Fe-2S]-[ferredoxin] + acetyl-CoA + CO2 + H(+). This Methanothermobacter marburgensis (strain ATCC BAA-927 / DSM 2133 / JCM 14651 / NBRC 100331 / OCM 82 / Marburg) (Methanobacterium thermoautotrophicum) protein is Pyruvate synthase subunit PorC (porC).